The chain runs to 427 residues: Heterogeneous nuclear ribonucleoprotein K (427 aa).

Residues 1-34 form a disordered region; the sequence is METEQQEETFTNTETNGKRPAEDMEEEQAFKRSR. The span at 16-34 shows a compositional bias: basic and acidic residues; it reads NGKRPAEDMEEEQAFKRSR. 2 consecutive KH domains span residues 39–101 and 117–182; these read MVEL…LKKI and DCEL…IKII. A run of 2 repeats spans residues 51 to 73 and 56 to 59. A 2 X 22 AA approximate repeats region spans residues 51–385; the sequence is AGAVIGKGGK…QIRHESGASI (335 aa). The segment at 56–371 is 5 X 4 AA repeats of G-X-G-G; the sequence is GKGGKNIKAL…LAGSIIGKGG (316 aa). The interval 209-246 is RNA-binding RGG-box; the sequence is YGGFTMMFDDRRGRPVGFPMRGRGGFDRMPPNRGGRPM. Tandem repeats lie at residues 218 to 223, 230 to 233, and 240 to 243. Residues 218–302 are 2 X 6 AA approximate repeats; it reads DRRGRPVGFP…LMSYDRRGRP (85 aa). A disordered region spans residues 221–305; sequence GRPVGFPMRG…YDRRGRPGDR (85 aa). Residues 249 to 258 show a composition bias toward basic and acidic residues; sequence SRRDYDDMSP. Repeat copies occupy residues 268–271, 297–302, 363–385, and 368–371. Residues 295–305 show a composition bias toward basic and acidic residues; the sequence is SYDRRGRPGDR. The region spanning 351-415 is the KH 3 domain; it reads IITTQVTIPK…DQIQNAQYLL (65 aa).

It localises to the cytoplasm. The protein localises to the nucleus. The protein resides in the nucleoplasm. One of the major pre-mRNA-binding proteins. Binds tenaciously to poly(C) sequences. Likely to play a role in the nuclear metabolism of hnRNAs, particularly for pre-mRNAs that contain cytidine-rich sequences. Can also bind poly(C) single-stranded DNA. May play an important role in p53/TP53 response to DNA damage, acting at the level of both transcription activation and repression. As part of a ribonucleoprotein complex, may negatively regulate the transcription of genes involved in neuronal differentiation. The polypeptide is Heterogeneous nuclear ribonucleoprotein K (HNRNPK) (Gallus gallus (Chicken)).